A 685-amino-acid polypeptide reads, in one-letter code: Polyphosphate kinase (685 aa).

Residue N45 participates in ATP binding. Mg(2+) is bound by residues R375 and R405. The active-site Phosphohistidine intermediate is the H435. 3 residues coordinate ATP: Y468, R564, and H592.

Belongs to the polyphosphate kinase 1 (PPK1) family. Requires Mg(2+) as cofactor. In terms of processing, an intermediate of this reaction is the autophosphorylated ppk in which a phosphate is covalently linked to a histidine residue through a N-P bond.

The enzyme catalyses [phosphate](n) + ATP = [phosphate](n+1) + ADP. Its function is as follows. Catalyzes the reversible transfer of the terminal phosphate of ATP to form a long-chain polyphosphate (polyP). The polypeptide is Polyphosphate kinase (Neisseria meningitidis serogroup A / serotype 4A (strain DSM 15465 / Z2491)).